Here is a 431-residue protein sequence, read N- to C-terminus: Methionine aminopeptidase 2-2 (431 aa).

The disordered stretch occupies residues M1–F76. Residues E35 to D47 are compositionally biased toward acidic residues. H184 provides a ligand contact to substrate. D204, D215, and H284 together coordinate a divalent metal cation. Residue H292 coordinates substrate. The a divalent metal cation site is built by E317 and E412.

Belongs to the peptidase M24A family. Methionine aminopeptidase eukaryotic type 2 subfamily. Requires Co(2+) as cofactor. Zn(2+) is required as a cofactor. It depends on Mn(2+) as a cofactor. Fe(2+) serves as cofactor.

It localises to the cytoplasm. The catalysed reaction is Release of N-terminal amino acids, preferentially methionine, from peptides and arylamides.. Cotranslationally removes the N-terminal methionine from nascent proteins. The N-terminal methionine is often cleaved when the second residue in the primary sequence is small and uncharged (Met-Ala-, Cys, Gly, Pro, Ser, Thr, or Val). The sequence is that of Methionine aminopeptidase 2-2 from Aspergillus niger (strain ATCC MYA-4892 / CBS 513.88 / FGSC A1513).